Here is an 877-residue protein sequence, read N- to C-terminus: MSTYSRYNDEDEIRNNKISFGDNIKREFLHLKLLLKKNLLVSIRSYFSTGIEILSPIAFIIILFLISHFGSGNENPIVTYNQELPICKSYGENRCFNIMFSPSNSPSAIAIMEMLGEINNNSIYSYPSDTGYLPDLNNTIGLKGGLIMMNSIEDSFEFVLAHPNVTIAAVDFLSIPLGFQINGAPPKNEPLLKMDGNSLEFNVVVNTTCPNILATCPDYSIAITTAIEKAVITYYSQKIRNEKIPPPTISYGSNAFPRYPPEQGAARVWGGLFYYCGSMISFIFLLYKVSFEKENKLKQGMVMMGLSVNQYWISWFITSFTIDILISLITIIVGLACQLPFFLGSNFFVLIITFSLFTISMSSVAFFLLTFIQSTKSAIGIGMGIFIVGSIFQLVFSGMGTMIFELIYQTNSNGALAARIILFFIPMFHFTKVLTDIGNVTTNYPLLTYKFSDLSTDLNIGGTVLKTVIPTTGQSICYLLALIGVYTVLAWYFEHIIPGNDGTSSPPWFFVLPSYWGLSLKKVRHIPTPYFDDEDVRAAITKAHDASNRAPLIICGLSKSYTKLFRPKKTVHAVKYLSLSVEKGTILGFLGSNGCGKSTTIGMLTGLLEPTAGDALVYGHSVISNIAAVRRITSVVPQHDILWAEMTAREHLQLFSELKGIPAQERESQIQKVLDQVRLSKISNNLISTYSGGMKRRLSVAIACIGDPKIIFMDEPTTGVDPSSKRHLIDLVKSIKNDKVIILTSHDMHEVEILADKIVIMNEGVMACNGNSLQLKSKYGEGYSVNIVAKSPESIPAVVEFVTLSIPGCKFMKQSALQLNFGFPVTIDHQIIANFFKQLEEITNDPNNQLMRDWSVSHSTLDDVFLKVSHLAKLKTQ.

A run of 7 helical transmembrane segments spans residues 46–66 (YFST…LFLI), 268–288 (VWGG…LLYK), 324–344 (ILIS…FFLG), 347–367 (FFVL…VAFF), 379–399 (IGIG…FSGM), 420–440 (IILF…IGNV), and 479–499 (LLAL…IIPG). One can recognise an ABC transporter domain in the interval 552–788 (LIICGLSKSY…YGEGYSVNIV (237 aa)). 591-598 (GSNGCGKS) is an ATP binding site.

Belongs to the ABC transporter superfamily. ABCA family.

It is found in the membrane. The polypeptide is ABC transporter A family member 1 (abcA1) (Dictyostelium discoideum (Social amoeba)).